Reading from the N-terminus, the 226-residue chain is Ribonuclease 3 (226 aa).

One can recognise an RNase III domain in the interval 6–128 (INRLQRKLGY…LIGGVFLDSN (123 aa)). Position 41 (E41) interacts with Mg(2+). D45 is a catalytic residue. The Mg(2+) site is built by D114 and E117. The active site involves E117. Positions 155–225 (DPKTRLQEYL…AEQALKKLEL (71 aa)) constitute a DRBM domain.

The protein belongs to the ribonuclease III family. As to quaternary structure, homodimer. Requires Mg(2+) as cofactor.

It localises to the cytoplasm. It carries out the reaction Endonucleolytic cleavage to 5'-phosphomonoester.. Its function is as follows. Digests double-stranded RNA. Involved in the processing of primary rRNA transcript to yield the immediate precursors to the large and small rRNAs (23S and 16S). Processes some mRNAs, and tRNAs when they are encoded in the rRNA operon. Processes pre-crRNA and tracrRNA of type II CRISPR loci if present in the organism. This Salmonella enteritidis PT4 (strain P125109) protein is Ribonuclease 3.